Consider the following 274-residue polypeptide: Lectin-like protein (274 aa).

Residues 1–19 (MKIHKLCFLALLLAHTTSA) form the signal peptide. The interval 28 to 268 (TSELVFLGDA…RHDIWSWTFQ (241 aa)) is legume-lectin like. Residues 62–81 (SHGQSLWSTPVPFKPSSNSS) are disordered. N-linked (GlcNAc...) asparagine glycosylation occurs at asparagine 129. Residue serine 238 is modified to Phosphoserine.

Belongs to the leguminous lectin family. In terms of tissue distribution, expressed in seedlings and leaves of adult plants.

The protein resides in the secreted. It localises to the extracellular space. The protein localises to the apoplast. It is found in the cell membrane. Functionally, plays a positive role in the effector-triggered immunity (ETI) response. Involved in salicylic acid (SA)-mediated processes occurring in ETI response, but is not involved in the autophagy process. Promotes systemic rather than local immunity. Essential for systemic acquired resistance (SAR), but not necessary for immune signaling downstream of SA. May act in parallel with SA. The sequence is that of Lectin-like protein from Arabidopsis thaliana (Mouse-ear cress).